Consider the following 380-residue polypeptide: Deoxyguanosinetriphosphate triphosphohydrolase-like protein (380 aa).

Positions 79-196 constitute an HD domain; it reads RLTHTLEVQQ…VDAADALAYT (118 aa).

It belongs to the dGTPase family. Type 2 subfamily.

This is Deoxyguanosinetriphosphate triphosphohydrolase-like protein from Deinococcus deserti (strain DSM 17065 / CIP 109153 / LMG 22923 / VCD115).